Consider the following 422-residue polypeptide: Serine--tRNA ligase (422 aa).

229 to 231 (TAE) provides a ligand contact to L-serine. 260–262 (RKE) provides a ligand contact to ATP. Glu-283 is an L-serine binding site. Residue 347-350 (EISS) participates in ATP binding. Position 383 (Ser-383) interacts with L-serine.

It belongs to the class-II aminoacyl-tRNA synthetase family. Type-1 seryl-tRNA synthetase subfamily. As to quaternary structure, homodimer. The tRNA molecule binds across the dimer.

It is found in the cytoplasm. The catalysed reaction is tRNA(Ser) + L-serine + ATP = L-seryl-tRNA(Ser) + AMP + diphosphate + H(+). It catalyses the reaction tRNA(Sec) + L-serine + ATP = L-seryl-tRNA(Sec) + AMP + diphosphate + H(+). It participates in aminoacyl-tRNA biosynthesis; selenocysteinyl-tRNA(Sec) biosynthesis; L-seryl-tRNA(Sec) from L-serine and tRNA(Sec): step 1/1. Functionally, catalyzes the attachment of serine to tRNA(Ser). Is also able to aminoacylate tRNA(Sec) with serine, to form the misacylated tRNA L-seryl-tRNA(Sec), which will be further converted into selenocysteinyl-tRNA(Sec). The chain is Serine--tRNA ligase from Natranaerobius thermophilus (strain ATCC BAA-1301 / DSM 18059 / JW/NM-WN-LF).